We begin with the raw amino-acid sequence, 305 residues long: NAD kinase 2 (305 aa).

The Proton acceptor role is filled by Asp78. NAD(+) is bound by residues Asp78–Gly79, Asn152–Glu153, Asp182, Thr193–Ser198, and Asn251.

It belongs to the NAD kinase family. Requires a divalent metal cation as cofactor.

The protein resides in the cytoplasm. It carries out the reaction NAD(+) + ATP = ADP + NADP(+) + H(+). Involved in the regulation of the intracellular balance of NAD and NADP, and is a key enzyme in the biosynthesis of NADP. Catalyzes specifically the phosphorylation on 2'-hydroxyl of the adenosine moiety of NAD to yield NADP. Functions as a growth repressor under light-activated heterotrophic growth conditions and light and dark cycle conditions in the presence of glucose. NADP(H)/NAD(H) maintenance by slr0400 probably plays a significant role in modulating glycolysis and the TCA cycle to repress the growth rate and maintain the photosynthetic capacity. This chain is NAD kinase 2, found in Synechocystis sp. (strain ATCC 27184 / PCC 6803 / Kazusa).